A 334-amino-acid polypeptide reads, in one-letter code: Adenosine deaminase (334 aa).

2 residues coordinate Zn(2+): histidine 16 and histidine 18. Histidine 18, aspartate 20, and glycine 173 together coordinate substrate. Histidine 200 serves as a coordination point for Zn(2+). Glutamate 203 acts as the Proton donor in catalysis. Aspartate 281 is a binding site for Zn(2+).

It belongs to the metallo-dependent hydrolases superfamily. Adenosine and AMP deaminases family. Adenosine deaminase subfamily. It depends on Zn(2+) as a cofactor.

It catalyses the reaction adenosine + H2O + H(+) = inosine + NH4(+). It carries out the reaction 2'-deoxyadenosine + H2O + H(+) = 2'-deoxyinosine + NH4(+). Catalyzes the hydrolytic deamination of adenosine and 2-deoxyadenosine. The chain is Adenosine deaminase from Clostridium acetobutylicum (strain ATCC 824 / DSM 792 / JCM 1419 / IAM 19013 / LMG 5710 / NBRC 13948 / NRRL B-527 / VKM B-1787 / 2291 / W).